Reading from the N-terminus, the 380-residue chain is Transcription factor RF2a (380 aa).

The segment at 1–57 (MNREKSPIPGDGGDGLPPQATRRAGPPAAAAAAEYDISRMPDFPTRNPGHRRAHSEI) is disordered. The segment covering 16–33 (LPPQATRRAGPPAAAAAA) has biased composition (low complexity). An activation of RTBV promoter region spans residues 56 to 108 (EILSLPEDLDLCAAGGGDGPSLSDENDEELFSMFLDVEKLNSTCGASSEAEAE). Residues 181–244 (DPKRAKRIWA…SGLTTENSEL (64 aa)) form the bZIP domain. Positions 183 to 204 (KRAKRIWANRQSAARSKERKMR) are basic motif. The interval 209–244 (LERKVQTLQTEATTLSAQLALLQRDTSGLTTENSEL) is leucine-zipper. Positions 283-357 (GGMMMNFGGM…AQQLQQAARD (75 aa)) are interaction with TBP2. Positions 326 to 355 (QAQQQQVLHPQHQQQQPLHPLQAQQLQQAA) are enriched in low complexity. The tract at residues 326–380 (QAQQQQVLHPQHQQQQPLHPLQAQQLQQAARDLKMKSPMGGQSQWGDGKSGSSGN) is disordered.

This sequence belongs to the bZIP family. Binds DNA as a homodimer or as a heterodimer with RF2b. The heterodimer binds stronger to DNA than the homodimer. Interacts with TBP2. Expressed at high levels in levels in leaf sheath, moderate levels in leaf blade, but not in roots. Predominantly expressed in vascular tissues.

It localises to the nucleus. Transcription factor probably involved in vascular development and shoot tissue organization. Binds to the DNA sequence 5'-CCGAGTGTGCCCCTGG-3' present in the promoter region Box II of the phloem-specific rice tungro bacilliform virus (RTBV) promoter. May regulate tissue-specific expression of the RTBV promoter and virus replication. The polypeptide is Transcription factor RF2a (RF2a) (Oryza sativa subsp. japonica (Rice)).